The primary structure comprises 100 residues: ATP-dependent Clp protease adapter protein ClpS (100 aa).

The protein belongs to the ClpS family. As to quaternary structure, binds to the N-terminal domain of the chaperone ClpA.

Involved in the modulation of the specificity of the ClpAP-mediated ATP-dependent protein degradation. This Neisseria meningitidis serogroup B (strain ATCC BAA-335 / MC58) protein is ATP-dependent Clp protease adapter protein ClpS.